The chain runs to 133 residues: ATP synthase epsilon chain, chloroplastic (133 aa).

Belongs to the ATPase epsilon chain family. As to quaternary structure, F-type ATPases have 2 components, CF(1) - the catalytic core - and CF(0) - the membrane proton channel. CF(1) has five subunits: alpha(3), beta(3), gamma(1), delta(1), epsilon(1). CF(0) has three main subunits: a, b and c.

The protein localises to the plastid. It is found in the chloroplast thylakoid membrane. Its function is as follows. Produces ATP from ADP in the presence of a proton gradient across the membrane. This chain is ATP synthase epsilon chain, chloroplastic, found in Morus indica (Mulberry).